The sequence spans 448 residues: Keratin, type I cytoskeletal 27 (448 aa).

A head region spans residues 1–73 (MSVRFSSASR…ANEHGLLSGN (73 aa)). Residues 74 to 109 (EKVTMQNLNDRLASYLENVQALEEANADLEQKIKDW) form a coil 1A region. The 316-residue stretch at 74–389 (EKVTMQNLND…RLIDGDEGSC (316 aa)) folds into the IF rod domain. The tract at residues 110–131 (YEKFGPGSCRGLDHDYSRYFPI) is linker 1. Residues 132–223 (IDDLRTQIIS…KNHEEEMQAL (92 aa)) form a coil 1B region. The segment at 224 to 246 (QCAAGGNVNVEMNAAPGVDLTVL) is linker 12. The coil 2 stretch occupies residues 247-385 (LNNMRAEYEA…ETYCRLIDGD (139 aa)). The tract at residues 386–448 (EGSCVKAKGQ…VNKTEQRIPS (63 aa)) is tail. Residues 427-448 (SRVHTLEEKSTKVNKTEQRIPS) are disordered. Basic and acidic residues predominate over residues 430–448 (HTLEEKSTKVNKTEQRIPS).

The protein belongs to the intermediate filament family. In terms of assembly, heterotetramer of two type I and two type II keratins. Interacts with KRT6A to form filaments. As to expression, expressed in skin. Expressed in the Henle layer and cuticle of the irs in hair follicle bulb. In the hair follicle, expression was observed in all layers of the irs but was stronger in the Henle layer and cuticle than the Huxley layer until the Henle layer differentiated (at protein level).

The protein localises to the cytoplasm. Essential for the proper assembly of type I and type II keratin protein complexes and formation of keratin intermediate filaments in the inner root sheath (irs). This Mus musculus (Mouse) protein is Keratin, type I cytoskeletal 27.